The primary structure comprises 154 residues: D-aminoacyl-tRNA deacylase (154 aa).

The short motif at 142–143 is the Gly-cisPro motif, important for rejection of L-amino acids element; the sequence is GP.

This sequence belongs to the DTD family. Homodimer.

It localises to the cytoplasm. It carries out the reaction glycyl-tRNA(Ala) + H2O = tRNA(Ala) + glycine + H(+). The enzyme catalyses a D-aminoacyl-tRNA + H2O = a tRNA + a D-alpha-amino acid + H(+). In terms of biological role, an aminoacyl-tRNA editing enzyme that deacylates mischarged D-aminoacyl-tRNAs. Also deacylates mischarged glycyl-tRNA(Ala), protecting cells against glycine mischarging by AlaRS. Acts via tRNA-based rather than protein-based catalysis; rejects L-amino acids rather than detecting D-amino acids in the active site. By recycling D-aminoacyl-tRNA to D-amino acids and free tRNA molecules, this enzyme counteracts the toxicity associated with the formation of D-aminoacyl-tRNA entities in vivo and helps enforce protein L-homochirality. The polypeptide is D-aminoacyl-tRNA deacylase (DTD1) (Yarrowia lipolytica (strain CLIB 122 / E 150) (Yeast)).